The following is a 78-amino-acid chain: Small ribosomal subunit protein bS16c (78 aa).

The protein belongs to the bacterial ribosomal protein bS16 family.

It is found in the plastid. The protein resides in the chloroplast. The polypeptide is Small ribosomal subunit protein bS16c (Gracilaria tenuistipitata var. liui (Red alga)).